A 390-amino-acid polypeptide reads, in one-letter code: Magnesium-protoporphyrin IX monomethyl ester [oxidative] cyclase (390 aa).

Residues 1-20 (MSQSTIESTNKKEINKGKAP) are disordered.

It belongs to the AcsF family. Fe cation serves as cofactor.

It carries out the reaction Mg-protoporphyrin IX 13-monomethyl ester + 3 NADPH + 3 O2 + 2 H(+) = 3,8-divinyl protochlorophyllide a + 3 NADP(+) + 5 H2O. The protein operates within porphyrin-containing compound metabolism; chlorophyll biosynthesis (light-independent). In terms of biological role, catalyzes the formation of the isocyclic ring in chlorophyll biosynthesis. Mediates the cyclase reaction, which results in the formation of divinylprotochlorophyllide (Pchlide) characteristic of all chlorophylls from magnesium-protoporphyrin IX 13-monomethyl ester (MgPMME). The sequence is that of Magnesium-protoporphyrin IX monomethyl ester [oxidative] cyclase from Prochlorococcus marinus (strain MIT 9301).